A 227-amino-acid chain; its full sequence is MAYPLQLGLQDATSPIMEELTSFHDHTLMIVFLISSLVLYIISSMLTTKMTHTNTMDAQGVETIWTILPAAILVLIALPSLRILYMMDEINNPALTVKTMGHQWYWSYEYTDYEDLYFDSYMTPTSDLKPGELRLLEVDNRVVLPMELPIRMLISSEDVLHSWAVPSLGLKTDAIPGRLNQATISSNRPGLFYGQCSEICGSNHSFMPIVLEMVPLKHFENWSASMI.

At 1–14 (MAYPLQLGLQDATS) the chain is on the mitochondrial intermembrane side. Residues 15–45 (PIMEELTSFHDHTLMIVFLISSLVLYIISSM) traverse the membrane as a helical segment. The Mitochondrial matrix portion of the chain corresponds to 46–59 (LTTKMTHTNTMDAQ). Residues 60–87 (GVETIWTILPAAILVLIALPSLRILYMM) traverse the membrane as a helical segment. Over 88–227 (DEINNPALTV…HFENWSASMI (140 aa)) the chain is Mitochondrial intermembrane. Cu cation-binding residues include His161, Cys196, Glu198, Cys200, His204, and Met207. Glu198 provides a ligand contact to Mg(2+).

The protein belongs to the cytochrome c oxidase subunit 2 family. In terms of assembly, component of the cytochrome c oxidase (complex IV, CIV), a multisubunit enzyme composed of 14 subunits. The complex is composed of a catalytic core of 3 subunits MT-CO1, MT-CO2 and MT-CO3, encoded in the mitochondrial DNA, and 11 supernumerary subunits COX4I, COX5A, COX5B, COX6A, COX6B, COX6C, COX7A, COX7B, COX7C, COX8 and NDUFA4, which are encoded in the nuclear genome. The complex exists as a monomer or a dimer and forms supercomplexes (SCs) in the inner mitochondrial membrane with NADH-ubiquinone oxidoreductase (complex I, CI) and ubiquinol-cytochrome c oxidoreductase (cytochrome b-c1 complex, complex III, CIII), resulting in different assemblies (supercomplex SCI(1)III(2)IV(1) and megacomplex MCI(2)III(2)IV(2)). Found in a complex with TMEM177, COA6, COX18, COX20, SCO1 and SCO2. Interacts with TMEM177 in a COX20-dependent manner. Interacts with COX20. Interacts with COX16. It depends on Cu cation as a cofactor.

It is found in the mitochondrion inner membrane. The enzyme catalyses 4 Fe(II)-[cytochrome c] + O2 + 8 H(+)(in) = 4 Fe(III)-[cytochrome c] + 2 H2O + 4 H(+)(out). Component of the cytochrome c oxidase, the last enzyme in the mitochondrial electron transport chain which drives oxidative phosphorylation. The respiratory chain contains 3 multisubunit complexes succinate dehydrogenase (complex II, CII), ubiquinol-cytochrome c oxidoreductase (cytochrome b-c1 complex, complex III, CIII) and cytochrome c oxidase (complex IV, CIV), that cooperate to transfer electrons derived from NADH and succinate to molecular oxygen, creating an electrochemical gradient over the inner membrane that drives transmembrane transport and the ATP synthase. Cytochrome c oxidase is the component of the respiratory chain that catalyzes the reduction of oxygen to water. Electrons originating from reduced cytochrome c in the intermembrane space (IMS) are transferred via the dinuclear copper A center (CU(A)) of subunit 2 and heme A of subunit 1 to the active site in subunit 1, a binuclear center (BNC) formed by heme A3 and copper B (CU(B)). The BNC reduces molecular oxygen to 2 water molecules using 4 electrons from cytochrome c in the IMS and 4 protons from the mitochondrial matrix. This is Cytochrome c oxidase subunit 2 (MT-CO2) from Acomys ignitus (Fiery spiny mouse).